A 38-amino-acid polypeptide reads, in one-letter code: 4 kDa defensin (38 aa).

3 cysteine pairs are disulfide-bonded: C4–C25, C11–C33, and C15–C35.

It belongs to the invertebrate defensin family. Type 2 subfamily.

It is found in the secreted. In terms of biological role, dual-function peptide with antimicrobial and potassium channel-blocking activities. Shows inhibitory activity against Gram-positive bacteria such as M.luteus, S.aureus, B.subtilis, and M.luteus as well as methicillin-resistant S.aureus (MIC=0.1-20 uM). Does not act on bacteria by disrupting membranes. Also moderately inhibits Kv1.1/KCNA1, Kv1.2/KCNA2, and Kv1.3/KCNA3 potassium channels. Inhibits potassium channels by interacting with the pore region. Does not show hemolytic activity. This is 4 kDa defensin from Leiurus hebraeus (Hebrew deathstalker scorpion).